Consider the following 445-residue polypeptide: Gamma-glutamyl phosphate reductase (445 aa).

It belongs to the gamma-glutamyl phosphate reductase family.

It is found in the cytoplasm. It carries out the reaction L-glutamate 5-semialdehyde + phosphate + NADP(+) = L-glutamyl 5-phosphate + NADPH + H(+). It participates in amino-acid biosynthesis; L-proline biosynthesis; L-glutamate 5-semialdehyde from L-glutamate: step 2/2. Its function is as follows. Catalyzes the NADPH-dependent reduction of L-glutamate 5-phosphate into L-glutamate 5-semialdehyde and phosphate. The product spontaneously undergoes cyclization to form 1-pyrroline-5-carboxylate. In Saccharopolyspora erythraea (strain ATCC 11635 / DSM 40517 / JCM 4748 / NBRC 13426 / NCIMB 8594 / NRRL 2338), this protein is Gamma-glutamyl phosphate reductase.